Consider the following 182-residue polypeptide: Large ribosomal subunit protein uL6 (182 aa).

This sequence belongs to the universal ribosomal protein uL6 family. Part of the 50S ribosomal subunit.

Functionally, this protein binds to the 23S rRNA, and is important in its secondary structure. It is located near the subunit interface in the base of the L7/L12 stalk, and near the tRNA binding site of the peptidyltransferase center. This chain is Large ribosomal subunit protein uL6, found in Caldicellulosiruptor bescii (strain ATCC BAA-1888 / DSM 6725 / KCTC 15123 / Z-1320) (Anaerocellum thermophilum).